Here is a 467-residue protein sequence, read N- to C-terminus: Uronate isomerase (467 aa).

It belongs to the metallo-dependent hydrolases superfamily. Uronate isomerase family.

It carries out the reaction D-glucuronate = D-fructuronate. The enzyme catalyses aldehydo-D-galacturonate = keto-D-tagaturonate. It participates in carbohydrate metabolism; pentose and glucuronate interconversion. The sequence is that of Uronate isomerase from Haemophilus influenzae (strain PittGG).